A 473-amino-acid chain; its full sequence is Trigger factor (473 aa).

Positions glycine 174–proline 261 constitute a PPIase FKBP-type domain. Residues glutamate 437–lysine 473 form a disordered region. Residues lysine 456–asparagine 466 show a composition bias toward basic and acidic residues.

Belongs to the FKBP-type PPIase family. Tig subfamily.

The protein localises to the cytoplasm. It catalyses the reaction [protein]-peptidylproline (omega=180) = [protein]-peptidylproline (omega=0). Functionally, involved in protein export. Acts as a chaperone by maintaining the newly synthesized protein in an open conformation. Functions as a peptidyl-prolyl cis-trans isomerase. In Prochlorococcus marinus (strain MIT 9515), this protein is Trigger factor.